Consider the following 435-residue polypeptide: Putative pyridoxal-phosphate dependent protein F13B12.4 (435 aa).

A signal peptide spans 1-18 (MKLLLLALFLSISASCLA). Asn79 is a glycosylation site (N-linked (GlcNAc...) asparagine). At Lys89 the chain carries N6-(pyridoxal phosphate)lysine. 235-239 (GTGGT) lines the pyridoxal 5'-phosphate pocket. An N-linked (GlcNAc...) asparagine glycan is attached at Asn277. Ser342 contacts pyridoxal 5'-phosphate.

Belongs to the cysteine synthase/cystathionine beta-synthase family. Highly divergent.

The polypeptide is Putative pyridoxal-phosphate dependent protein F13B12.4 (Caenorhabditis elegans).